Reading from the N-terminus, the 519-residue chain is Protein BANP (519 aa).

Ser19, Ser90, and Ser100 each carry phosphoserine. The stretch at 53 to 90 (IKTICLRLDSIEAKLQALEATCKSLEEKLDLVTNKQHS) forms a coiled coil. A Glycyl lysine isopeptide (Lys-Gly) (interchain with G-Cter in SUMO2) cross-link involves residue Lys133. The interval 152 to 342 (NAVPGRRQNT…FSRRTPNSSS (191 aa)) is interaction with CUX1 and HDAC1. Over residues 168-177 (GQEDSHHEDG) the composition is skewed to basic and acidic residues. The interval 168-196 (GQEDSHHEDGESGSEASDSVSSCGQAGSQ) is disordered. Low complexity predominate over residues 180–189 (GSEASDSVSS). A BEN domain is found at 226–322 (EMRVRCAIIP…SKCRTAWRRK (97 aa)). Lys275 bears the N6-acetyllysine mark. Positions 327 to 364 (SLAVKSFSRRTPNSSSYCPSEPMMSTPPPASELPQPQP) are disordered. Residues 335-344 (RRTPNSSSYC) show a composition bias toward polar residues. Thr337 and Thr352 each carry phosphothreonine. Residues 342-393 (SYCPSEPMMSTPPPASELPQPQPQPQALHYALANAQQVQIHQIGEDGQVQVG) form a DNA-binding region. Residues 351–364 (STPPPASELPQPQP) show a composition bias toward pro residues.

Belongs to the BANP/SMAR1 family. Part of a corepressor complex containing BANP, HDAC1, SIN3A, SIN3B, RBL1 and RBL2. Forms a trimeric complex in the nucleus consisting of BANP, HDAC6 and KHDRBS1/SAM68; HDAC6 keeps KHDRBS1 in a deacetylated state which inhibits the inclusion of CD44 alternate exons. The complex is disrupted by MAPK1/MAPK3-mediated phosphorylation of BANP which results in BANP export to the cytoplasm. This facilitates acetylation of KHDRBS1 and CD44 variant exon inclusion. Interacts with TP53. Interacts with CUX1/CDP. Interacts with HDAC1. In terms of processing, MAPK1/MAPK3-mediated phosphorylation at Thr-337 and Thr-352 results in export to the cytoplasm. Down-regulated in breast cancer cell lines.

Its subcellular location is the nucleus. The protein localises to the nucleus speckle. It localises to the cytoplasm. In terms of biological role, controls V(D)J recombination during T-cell development by repressing T-cell receptor (TCR) beta enhancer function. Binds to scaffold/matrix attachment region beta (S/MARbeta), an ATC-rich DNA sequence located upstream of the TCR beta enhancer. Represses cyclin D1 transcription by recruiting HDAC1 to its promoter, thereby diminishing H3K9ac, H3S10ph and H4K8ac levels. Promotes TP53 activation, which causes cell cycle arrest. Plays a role in the regulation of alternative splicing. Binds to CD44 pre-mRNA and negatively regulates the inclusion of CD44 proximal variable exons v2-v6 but has no effect on distal variable exons v7-v10. The chain is Protein BANP (BANP) from Homo sapiens (Human).